The following is a 425-amino-acid chain: Histidine--tRNA ligase (425 aa).

It belongs to the class-II aminoacyl-tRNA synthetase family. Homodimer.

The protein localises to the cytoplasm. The enzyme catalyses tRNA(His) + L-histidine + ATP = L-histidyl-tRNA(His) + AMP + diphosphate + H(+). This chain is Histidine--tRNA ligase, found in Aeromonas salmonicida (strain A449).